A 471-amino-acid chain; its full sequence is A-type ATP synthase subunit B (471 aa).

Belongs to the ATPase alpha/beta chains family. In terms of assembly, has multiple subunits with at least A(3), B(3), C, D, E, F, H, I and proteolipid K(x).

The protein resides in the cell membrane. Component of the A-type ATP synthase that produces ATP from ADP in the presence of a proton gradient across the membrane. The B chain is a regulatory subunit. This chain is A-type ATP synthase subunit B, found in Halobacterium salinarum (strain ATCC 29341 / DSM 671 / R1).